The sequence spans 965 residues: Inner tegument protein (965 aa).

Residues 489-965 (WDLNKFYVLS…KLEQSITGSF (477 aa)) form an interaction with large tegument protein region.

This sequence belongs to the herpesviridae inner tegument protein family. Interacts (via C-terminus) with the large tegument protein/LTP (via N-terminus).

The protein localises to the virion tegument. Its subcellular location is the host cytoplasm. It localises to the host nucleus. It is found in the host Golgi apparatus. The protein resides in the host trans-Golgi network. Functionally, plays an essential role in cytoplasmic secondary envelopment during viral egress. Interacts with the capsid via the large tegument protein/LTP and participates in its transport to the host trans-Golgi network (TGN) where secondary envelopment occurs. Modulates tegumentation and capsid accumulation at the viral assembly complex. This is Inner tegument protein (63) from Equine herpesvirus 2 (strain 86/87) (EHV-2).